We begin with the raw amino-acid sequence, 212 residues long: ATP-dependent Clp protease proteolytic subunit (212 aa).

The active-site Nucleophile is serine 112. Histidine 137 is a catalytic residue.

It belongs to the peptidase S14 family. As to quaternary structure, fourteen ClpP subunits assemble into 2 heptameric rings which stack back to back to give a disk-like structure with a central cavity, resembling the structure of eukaryotic proteasomes.

The protein localises to the cytoplasm. It carries out the reaction Hydrolysis of proteins to small peptides in the presence of ATP and magnesium. alpha-casein is the usual test substrate. In the absence of ATP, only oligopeptides shorter than five residues are hydrolyzed (such as succinyl-Leu-Tyr-|-NHMec, and Leu-Tyr-Leu-|-Tyr-Trp, in which cleavage of the -Tyr-|-Leu- and -Tyr-|-Trp bonds also occurs).. Cleaves peptides in various proteins in a process that requires ATP hydrolysis. Has a chymotrypsin-like activity. Plays a major role in the degradation of misfolded proteins. The sequence is that of ATP-dependent Clp protease proteolytic subunit from Thiobacillus denitrificans (strain ATCC 25259 / T1).